We begin with the raw amino-acid sequence, 73 residues long: Putative membrane protein insertion efficiency factor (73 aa).

The protein belongs to the UPF0161 family.

Its subcellular location is the cell inner membrane. Could be involved in insertion of integral membrane proteins into the membrane. This chain is Putative membrane protein insertion efficiency factor, found in Phocaeicola vulgatus (strain ATCC 8482 / DSM 1447 / JCM 5826 / CCUG 4940 / NBRC 14291 / NCTC 11154) (Bacteroides vulgatus).